The chain runs to 312 residues: Iron/alpha-ketoglutarate-dependent dioxygenase penM (312 aa).

His134, Asp136, and His211 together coordinate Fe cation. Positions 287 to 312 (LGLKSEQPLPDGMEKGSMQETDIGGQ) are disordered.

This sequence belongs to the PhyH family. As to quaternary structure, homodimer. Fe cation is required as a cofactor.

It carries out the reaction (-)-cyclopeptine + 2-oxoglutarate + O2 = (Z)-dehydrocyclopeptine + succinate + CO2 + H2O. The enzyme catalyses (Z)-dehydrocyclopeptine + 2-oxoglutarate + O2 = (-)-cyclopenine + succinate + CO2. The catalysed reaction is (-)-4'-methoxycyclopeptine + 2-oxoglutarate + O2 = (Z)-4'-methoxydehydrocyclopeptine + succinate + CO2 + H2O. It catalyses the reaction (Z)-4'-methoxydehydrocyclopeptine + 2-oxoglutarate + O2 = (-)-4'-methoxycyclopenine + succinate + CO2. It participates in secondary metabolite biosynthesis. It functions in the pathway alkaloid biosynthesis. Its pathway is mycotoxin biosynthesis. Functionally, iron/alpha-ketoglutarate-dependent dioxygenase; part of the gene cluster that mediates the biosynthesis of penigequinolones, potent insecticidal alkaloids that contain a highly modified 10-carbon prenyl group. The first stage is catalyzed by the nonribosomal peptide synthetase penN that condenses anthranilic acid and O-methyl-L-tyrosine to produce 4'-methoxycyclopeptin. 4'-methoxycyclopeptin is then converted to 4'-methoxydehydrocyclopeptin by the ketoglutarate-dependent dioxygenase penM through dehydrogenation to form a double bond between C-alpha and C-beta of the O-methyltyrosine side chain. PenM also converts its first product methoxydehydrocyclopeptin to 4'-methoxycyclopenin. The following conversion of 4'methoxycyclopenin into 4'-methoxyviridicatin is catalyzed by the cyclopenase penL. 4'-methoxyviridicatin is the precursor of quinolone natural products, and is further converted to quinolinone B. The prenyltransferase penI then catalyzes the canonical Friedel-Crafts alkylation of quinolinone B with dimethylallyl cation to yield dimethylallyl quinolone, which is subjected to FAD-dependent dehydrogenation by the FAD-linked oxidoreductase penH to yield conjugated aryl diene. The delta(3') double bond then serves as the site of the second alkylation with DMAPP catalyzed by the prenyltransferase penG to yield a carbenium ion intermediate, which can be attacked by H(2)O to yield a styrenyl quinolone containing a C3'-hydroxyprenyl chain, or undergo cyclization to yield yaequinolones J1 and J2. The conversion of the styrenyl quinolone into the tetrahydrofuran-containing yaequinolone C is performed by the FAD-dependent monooxygenase penE and involves epoxidation of the terminal C7'-C8' olefin, followed by epoxide ring opening initiated by the C3' hydroxyl group. The predicted cysteine hydrolase penJ acts as an epoxide hydrolase that enhances the rate of the 5-exo-tet cyclization step, increasing the yield of yaequinolone C. PenF catalyzes the cationic rearrangement of the epoxide formed by penE (before ring opening to produce yaequinolone C) into yaequinolone D. Finally, the short-chain dehydrogenase/reductase (SDR)-like reductase penD, catalyzes both the dehydration of yaequinolone D and the reduction of the resulting oxonium to yield penigequinolone. This chain is Iron/alpha-ketoglutarate-dependent dioxygenase penM, found in Penicillium thymicola.